We begin with the raw amino-acid sequence, 185 residues long: Anaphase-promoting complex subunit 10 (185 aa).

N-acetylthreonine is present on Thr2. The 184-residue stretch at 2–185 (TTPNKTPPGA…IDFMMYRSIR (184 aa)) folds into the DOC domain. Lys169 carries the N6-acetyllysine modification.

The protein belongs to the APC10 family. The mammalian APC/C is composed at least of 14 distinct subunits ANAPC1, ANAPC2, CDC27/APC3, ANAPC4, ANAPC5, CDC16/APC6, ANAPC7, CDC23/APC8, ANAPC10, ANAPC11, CDC26/APC12, ANAPC13, ANAPC15 and ANAPC16 that assemble into a complex of at least 19 chains with a combined molecular mass of around 1.2 MDa; APC/C interacts with FZR1 and FBXO5. The C-terminus of APC10 binds to CDC27/APC3. Interacts with PIWIL1; interaction only takes place when PIWIL1 binds piRNA. Interacts with FBXO43; the interaction is direct.

The protein operates within protein modification; protein ubiquitination. Its function is as follows. Component of the anaphase promoting complex/cyclosome (APC/C), a cell cycle-regulated E3 ubiquitin ligase that controls progression through mitosis and the G1 phase of the cell cycle. The APC/C complex acts by mediating ubiquitination and subsequent degradation of target proteins: it mainly mediates the formation of 'Lys-11'-linked polyubiquitin chains and, to a lower extent, the formation of 'Lys-48'- and 'Lys-63'-linked polyubiquitin chains. The APC/C complex catalyzes assembly of branched 'Lys-11'-/'Lys-48'-linked branched ubiquitin chains on target proteins. The protein is Anaphase-promoting complex subunit 10 (ANAPC10) of Homo sapiens (Human).